The following is a 539-amino-acid chain: Putative cysteine ligase BshC (539 aa).

Residues Ser146 and 384–386 (ERH) each bind ADP. A coiled-coil region spans residues 455 to 475 (LLKNAAFIQDQLQFLERTVMK). Residues 490 to 493 (RIQN), Trp506, and Tyr510 each bind ADP.

This sequence belongs to the BshC family. Homodimer in solution.

Involved in bacillithiol (BSH) biosynthesis. May catalyze the last step of the pathway, the addition of cysteine to glucosamine malate (GlcN-Mal) to generate BSH. The polypeptide is Putative cysteine ligase BshC (Bacillus subtilis (strain 168)).